We begin with the raw amino-acid sequence, 155 residues long: Peptide methionine sulfoxide reductase MsrB (155 aa).

Positions 15-137 constitute a MsrB domain; that stretch reads REALIATLNA…NSVSLTFIPT (123 aa). Zn(2+)-binding residues include C54, C57, C103, and C106. C126 acts as the Nucleophile in catalysis.

It belongs to the MsrB Met sulfoxide reductase family. Zn(2+) serves as cofactor.

It catalyses the reaction L-methionyl-[protein] + [thioredoxin]-disulfide + H2O = L-methionyl-(R)-S-oxide-[protein] + [thioredoxin]-dithiol. This chain is Peptide methionine sulfoxide reductase MsrB, found in Xylella fastidiosa (strain M23).